The sequence spans 248 residues: Sulfur carrier protein FdhD (248 aa).

The active-site Cysteine persulfide intermediate is C99. 232 to 237 is a Mo-bis(molybdopterin guanine dinucleotide) binding site; sequence FVRGKR.

Belongs to the FdhD family.

It is found in the cytoplasm. Functionally, required for formate dehydrogenase (FDH) activity. Acts as a sulfur carrier protein that transfers sulfur from IscS to the molybdenum cofactor prior to its insertion into FDH. In Methanothermobacter thermautotrophicus (strain ATCC 29096 / DSM 1053 / JCM 10044 / NBRC 100330 / Delta H) (Methanobacterium thermoautotrophicum), this protein is Sulfur carrier protein FdhD.